The primary structure comprises 177 residues: R-phycoerythrin beta chain (177 aa).

Residues Asn-35 and Asp-39 each coordinate (2R,3E)-phycoerythrobilin. 3 residues coordinate phycourobilin: Cys-50, Asp-54, and Cys-61. (2R,3E)-phycoerythrobilin contacts are provided by residues Asn-72, 77-78 (RR), Cys-82, and 84-85 (RD). Asn-72 bears the N4-methylasparagine mark. Residue 147–148 (SQ) coordinates phycourobilin. Residues Ile-154 and Cys-158 each coordinate (2R,3E)-phycoerythrobilin.

It belongs to the phycobiliprotein family. In terms of assembly, heterododecamer of 6 alpha and 6 beta chains. The basic functional unit of phycobiliproteins is a ring-shaped hexamer formed from two back-to-back trimers contacting via the alpha chain subunits. The trimers are composed of alpha/beta subunit heterodimers arranged around a three-fold axis of symmetry. The phycoerythrins also contain a gamma subunit which is located in the center of the hexamer. Contains two covalently linked phycoerythrobilin chromophores and one covalently linked phycourobilin chromophore.

It localises to the plastid. The protein resides in the chloroplast thylakoid membrane. In terms of biological role, light-harvesting photosynthetic tetrapyrrole chromophore-protein from the phycobiliprotein complex. The protein is R-phycoerythrin beta chain (rpeB) of Agarophyton chilense (Red seaweed).